The primary structure comprises 138 residues: Phospholipase A2 crotoxin basic chain CBa2 (138 aa).

An N-terminal signal peptide occupies residues 1–16 (MRALWIVAVLLVGVEG). Disulfide bonds link Cys42–Cys131, Cys44–Cys60, Cys59–Cys111, Cys65–Cys138, Cys66–Cys104, Cys73–Cys97, and Cys91–Cys102. Tyr43, Gly45, and Gly47 together coordinate Ca(2+). Residue His63 is part of the active site. Asp64 provides a ligand contact to Ca(2+). Asp105 is an active-site residue.

This sequence belongs to the phospholipase A2 family. Group II subfamily. D49 sub-subfamily. As to quaternary structure, heterodimer of one of the acidic (CA1, CA2, CA3 or CA4) and one of the basic (CBa1, CBa2, CBb, CBc or CBd) subunits; non-covalently linked. The acidic subunit is non-toxic, without enzymatic activity and comprises 3 peptides that are cross-linked by 5 disulfide bridges. The basic subunit is toxic, has phospholipase A2 activity and is composed of a single chain. Multiple variants of each subunit give different crotoxin complexes that can be subdivided into 2 classes: (1) those of high toxicity, low PLA2 activity (CBb, CBc and CBd linked with high affinity to any CA) and high stability (K(d)=4.5 nM) and (2) those of moderate toxicity, high PLA2 activity (CBa2 linked with low affinity to any CA) and low stability (K(d)=25 nM). Interacts with human NBD1 domain of CFTR. The cofactor is Ca(2+). Expressed by the venom gland.

It localises to the secreted. It carries out the reaction a 1,2-diacyl-sn-glycero-3-phosphocholine + H2O = a 1-acyl-sn-glycero-3-phosphocholine + a fatty acid + H(+). Functionally, heterodimer CA-CB: Crotoxin is a potent presynaptic neurotoxin that possesses phospholipase A2 (PLA2) activity and exerts a lethal action by blocking neuromuscular transmission. It consists of a non-covalent association of a basic and weakly toxic PLA2 subunit (CBa2, CBb, CBc, or CBd), with a small acidic, non-enzymatic and non-toxic subunit (CA1, CA2, CA3 or CA4). The complex acts by binding to a specific 48-kDa protein (R48) receptor located on presynaptic membranes, forming a transient ternary complex CA-CB-R48, followed by dissociation of the CA-CB complex and release of the CA subunit. At equilibrium, only the CB subunits remain associated with the specific crotoxin receptor. In addition to neurotoxicity, crotoxin has been found to exert myotoxicity, nephrotoxicity, and cardiovascular toxicity. Moreover, anti-inflammatory, immunomodulatory, anti-tumor and analgesic effects of crotoxin have also been reported. Its function is as follows. Monomer CBa2: The basic subunit of crotoxin is a snake venom phospholipase A2 (PLA2) that exhibits weak neurotoxicity (10-fold less than the heterodimer) and strong anticoagulant effects by binding to factor Xa (F10) and inhibiting the prothrombinase activity (IC(50) is 41 nM). In addition, it shows the same effects described for the heterodimer and binds the nucleotide-binding domain (NBD1) of CFTR chloride channels and increases the channel current. PLA2 catalyzes the calcium-dependent hydrolysis of the 2-acyl groups in 3-sn-phosphoglycerides. The chain is Phospholipase A2 crotoxin basic chain CBa2 from Crotalus durissus terrificus (South American rattlesnake).